Here is a 308-residue protein sequence, read N- to C-terminus: Glutaminase 1 (308 aa).

7 residues coordinate substrate: Ser64, Asn116, Glu161, Asn168, Tyr192, Tyr244, and Val262.

It belongs to the glutaminase family. In terms of assembly, homotetramer.

The catalysed reaction is L-glutamine + H2O = L-glutamate + NH4(+). In Halalkalibacterium halodurans (strain ATCC BAA-125 / DSM 18197 / FERM 7344 / JCM 9153 / C-125) (Bacillus halodurans), this protein is Glutaminase 1.